We begin with the raw amino-acid sequence, 256 residues long: Large ribosomal subunit protein eL8B (256 aa).

The interval 1–37 is disordered; sequence MAPGKKVAPAPFGAKSTKSNKAKNPLTHSTPKNFGIG.

This sequence belongs to the eukaryotic ribosomal protein eL8 family. In terms of assembly, component of the large ribosomal subunit (LSU). Mature yeast ribosomes consist of a small (40S) and a large (60S) subunit. The 40S small subunit contains 1 molecule of ribosomal RNA (18S rRNA) and 33 different proteins (encoded by 57 genes). The large 60S subunit contains 3 rRNA molecules (25S, 5.8S and 5S rRNA) and 46 different proteins (encoded by 81 genes).

Its subcellular location is the cytoplasm. Its function is as follows. Component of the ribosome, a large ribonucleoprotein complex responsible for the synthesis of proteins in the cell. The small ribosomal subunit (SSU) binds messenger RNAs (mRNAs) and translates the encoded message by selecting cognate aminoacyl-transfer RNA (tRNA) molecules. The large subunit (LSU) contains the ribosomal catalytic site termed the peptidyl transferase center (PTC), which catalyzes the formation of peptide bonds, thereby polymerizing the amino acids delivered by tRNAs into a polypeptide chain. The nascent polypeptides leave the ribosome through a tunnel in the LSU and interact with protein factors that function in enzymatic processing, targeting, and the membrane insertion of nascent chains at the exit of the ribosomal tunnel. The protein is Large ribosomal subunit protein eL8B of Saccharomyces cerevisiae (strain ATCC 204508 / S288c) (Baker's yeast).